The chain runs to 300 residues: Jacalin-related lectin 33 (300 aa).

The disordered stretch occupies residues 1–20; the sequence is MAQKVEAGGGAGGASWDDGV. Ala-2 is modified (N-acetylalanine). Jacalin-type lectin domains lie at 2-146 and 154-297; these read AQKV…YFAT and AKKL…HVMP.

It belongs to the jacalin lectin family. In terms of assembly, component of the PYK10 complex, at least composed of PYK10/BGLU23, BGLU21, BGLU22, JAL22, JAL23, PBP1/JAL30, PBP2/JAL31, JAL32, JAL33, JAL34, JAL35, GLL22 and GLL23.

Functionally, sugar-binding protein showing significant affinity for (Glc alpha(1-4)Glc)(3) maltohexaose, (Glc alpha(1-6)Glc)(3) isomaltohexaose, Gal alpha(1-4)Gal beta(1-4)Glc, GalNAc alpha(1-3)(Fuc alpha(1-2)) and Gal beta(1-3)(Fuc alpha(1-4))GlcNAc beta(1-3)Gal beta(1-4)Glc. In Arabidopsis thaliana (Mouse-ear cress), this protein is Jacalin-related lectin 33 (JAL33).